A 153-amino-acid chain; its full sequence is Satratoxin biosynthesis SC2 cluster transcription factor SAT15 (153 aa).

The protein localises to the nucleus. Functionally, transcriptional regulator that may regulate the expression of the satratoxin biosynthesis SC2 cluster, one of the 3 clusters involved in the biosynthesis of satratoxins, trichothecene mycotoxins that are associated with human food poisonings. This is Satratoxin biosynthesis SC2 cluster transcription factor SAT15 from Stachybotrys chartarum (strain CBS 109288 / IBT 7711) (Toxic black mold).